A 120-amino-acid polypeptide reads, in one-letter code: MARIAGVDLPKKKRVEYALTCKNGIGLKSSREILEAVGISFDKRVHELSEDEVSSIAKKIQQSYLVEGDLRKKVQMDIKSLMDLGNYRGIRHRKGLPVRGQTTKNNARTRKGKKKTVGSK.

The tract at residues 92 to 120 (HRKGLPVRGQTTKNNARTRKGKKKTVGSK) is disordered. Positions 107 to 120 (ARTRKGKKKTVGSK) are enriched in basic residues.

The protein belongs to the universal ribosomal protein uS13 family. Part of the 30S ribosomal subunit. Forms a loose heterodimer with protein S19. Forms two bridges to the 50S subunit in the 70S ribosome.

In terms of biological role, located at the top of the head of the 30S subunit, it contacts several helices of the 16S rRNA. In the 70S ribosome it contacts the 23S rRNA (bridge B1a) and protein L5 of the 50S subunit (bridge B1b), connecting the 2 subunits; these bridges are implicated in subunit movement. Contacts the tRNAs in the A and P-sites. The sequence is that of Small ribosomal subunit protein uS13 from Helicobacter pylori (strain J99 / ATCC 700824) (Campylobacter pylori J99).